The following is a 282-amino-acid chain: Succinate dehydrogenase [ubiquinone] iron-sulfur subunit, mitochondrial (282 aa).

The N-terminal 26 residues, 1-26 (MAAVVFSLRRSGPVLRLSGALQVSRG), are a transit peptide targeting the mitochondrion. Residues 42 to 135 (KKFAIYRWDP…VSKIYPLPHM (94 aa)) enclose the 2Fe-2S ferredoxin-type domain. The [2Fe-2S] cluster site is built by Cys95, Cys100, Cys103, and Cys115. Positions 178 to 208 (DRDKLDGLYECILCACCSTSCPSYWWNADKY) constitute a 4Fe-4S ferredoxin-type domain. Cys188, Cys191, and Cys194 together coordinate [4Fe-4S] cluster. A [3Fe-4S] cluster-binding site is contributed by Cys198. Residue Trp203 coordinates a ubiquinone. Positions 245 and 251 each coordinate [3Fe-4S] cluster. Cys255 contributes to the [4Fe-4S] cluster binding site.

Belongs to the succinate dehydrogenase/fumarate reductase iron-sulfur protein family. As to quaternary structure, component of complex II composed of four subunits: the flavoprotein (FP) sdha, iron-sulfur protein (IP) sdhb, and a cytochrome b composed of sdhc and sdhd. Requires [2Fe-2S] cluster as cofactor. [3Fe-4S] cluster serves as cofactor. The cofactor is [4Fe-4S] cluster.

The protein localises to the mitochondrion inner membrane. It catalyses the reaction a quinone + succinate = fumarate + a quinol. It carries out the reaction (R)-malate + a quinone = enol-oxaloacetate + a quinol. The enzyme catalyses (S)-malate + a quinone = enol-oxaloacetate + a quinol. Its pathway is carbohydrate metabolism; tricarboxylic acid cycle; fumarate from succinate (eukaryal route): step 1/1. With respect to regulation, enol-oxaloacetate inhibits the succinate dehydrogenase activity. Its function is as follows. Iron-sulfur protein (IP) subunit of the succinate dehydrogenase complex (mitochondrial respiratory chain complex II), responsible for transferring electrons from succinate to ubiquinone (coenzyme Q). SDH also oxidizes malate to the non-canonical enol form of oxaloacetate, enol-oxaloacetate. Enol-oxaloacetate, which is a potent inhibitor of the succinate dehydrogenase activity, is further isomerized into keto-oxaloacetate. This Xenopus laevis (African clawed frog) protein is Succinate dehydrogenase [ubiquinone] iron-sulfur subunit, mitochondrial (sdhb).